Here is a 115-residue protein sequence, read N- to C-terminus: Anamorsin homolog 1 (115 aa).

The disordered stretch occupies residues valine 30–isoleucine 115. Positions 39, 46, 49, and 51 each coordinate [2Fe-2S] cluster. Positions cysteine 39 to cysteine 51 are fe-S binding site A. 4 residues coordinate [4Fe-4S] cluster: cysteine 77, cysteine 80, cysteine 88, and cysteine 91. Short sequence motifs (cx2C motif) lie at residues cysteine 77–cysteine 80 and cysteine 88–cysteine 91. Residues cysteine 77 to cysteine 91 form a fe-S binding site B region.

It belongs to the anamorsin family. Monomer. [2Fe-2S] cluster is required as a cofactor. [4Fe-4S] cluster serves as cofactor.

It is found in the cytoplasm. The protein localises to the mitochondrion intermembrane space. Functionally, component of the cytosolic iron-sulfur (Fe-S) protein assembly (CIA) machinery. Required for the maturation of extramitochondrial Fe-S proteins. Part of an electron transfer chain functioning in an early step of cytosolic Fe-S biogenesis, facilitating the de novo assembly of a [4Fe-4S] cluster on the cytosolic Fe-S scaffold complex. Electrons are transferred from NADPH via a FAD- and FMN-containing diflavin oxidoreductase. Together with the diflavin oxidoreductase, also required for the assembly of the diferric tyrosyl radical cofactor of ribonucleotide reductase (RNR), probably by providing electrons for reduction during radical cofactor maturation in the catalytic small subunit. This is Anamorsin homolog 1 from Trypanosoma cruzi (strain CL Brener).